The chain runs to 205 residues: Probable GTP-binding protein EngB (205 aa).

Residues T27–P201 enclose the EngB-type G domain. GTP is bound by residues G35 to S42, G62 to L66, D80 to G83, T147 to D150, and F180 to A182. Mg(2+) is bound by residues S42 and T64.

Belongs to the TRAFAC class TrmE-Era-EngA-EngB-Septin-like GTPase superfamily. EngB GTPase family. It depends on Mg(2+) as a cofactor.

Necessary for normal cell division and for the maintenance of normal septation. This chain is Probable GTP-binding protein EngB, found in Haemophilus influenzae (strain 86-028NP).